Here is a 192-residue protein sequence, read N- to C-terminus: Molybdenum cofactor guanylyltransferase (192 aa).

The GTP site is built by K21, D67, and D101. D101 is a binding site for Mg(2+).

Belongs to the MobA family. Monomer. Mg(2+) is required as a cofactor.

It is found in the cytoplasm. The catalysed reaction is Mo-molybdopterin + GTP + H(+) = Mo-molybdopterin guanine dinucleotide + diphosphate. Its function is as follows. Transfers a GMP moiety from GTP to Mo-molybdopterin (Mo-MPT) cofactor (Moco or molybdenum cofactor) to form Mo-molybdopterin guanine dinucleotide (Mo-MGD) cofactor. The protein is Molybdenum cofactor guanylyltransferase of Neisseria meningitidis serogroup C / serotype 2a (strain ATCC 700532 / DSM 15464 / FAM18).